Reading from the N-terminus, the 439-residue chain is Ribosomal protein uS12 methylthiotransferase RimO (439 aa).

Residues 7–119 form the MTTase N-terminal domain; it reads KQLCLISLGC…IDIMIAKKQN (113 aa). Cys16, Cys50, Cys82, Cys151, Cys155, and Cys158 together coordinate [4Fe-4S] cluster. The Radical SAM core domain occupies 137–368; that stretch reads TGSSVHAYVK…ALKHQNHSFK (232 aa).

It belongs to the methylthiotransferase family. RimO subfamily. Requires [4Fe-4S] cluster as cofactor.

Its subcellular location is the cytoplasm. It carries out the reaction L-aspartate(89)-[ribosomal protein uS12]-hydrogen + (sulfur carrier)-SH + AH2 + 2 S-adenosyl-L-methionine = 3-methylsulfanyl-L-aspartate(89)-[ribosomal protein uS12]-hydrogen + (sulfur carrier)-H + 5'-deoxyadenosine + L-methionine + A + S-adenosyl-L-homocysteine + 2 H(+). Functionally, catalyzes the methylthiolation of an aspartic acid residue of ribosomal protein uS12. In Helicobacter pylori (strain P12), this protein is Ribosomal protein uS12 methylthiotransferase RimO.